The chain runs to 906 residues: Translation initiation factor IF-2 (906 aa).

Disordered stretches follow at residues 134–250 and 269–317; these read RQRN…GSHV and HLSA…FERP. Basic and acidic residues predominate over residues 136–177; that stretch reads RNLDEQQRLAESDRVRDEEIQRKRDEEQAAKDRAEAERKAAE. 2 stretches are compositionally biased toward low complexity: residues 178–232 and 287–305; these read EAAA…STPA and GRPG…RGSN. Residues 405 to 574 form the tr-type G domain; it reads TRPPVVTIMG…SLQAEVLELK (170 aa). The G1 stretch occupies residues 414–421; it reads GHVDHGKT. 414-421 provides a ligand contact to GTP; the sequence is GHVDHGKT. Residues 439–443 are G2; the sequence is GITQH. The segment at 460 to 463 is G3; sequence DTPG. Residues 460–464 and 514–517 contribute to the GTP site; these read DTPGH and NKID. Residues 514–517 form a G4 region; that stretch reads NKID. A G5 region spans residues 550–552; that stretch reads SAK.

This sequence belongs to the TRAFAC class translation factor GTPase superfamily. Classic translation factor GTPase family. IF-2 subfamily.

Its subcellular location is the cytoplasm. One of the essential components for the initiation of protein synthesis. Protects formylmethionyl-tRNA from spontaneous hydrolysis and promotes its binding to the 30S ribosomal subunits. Also involved in the hydrolysis of GTP during the formation of the 70S ribosomal complex. The sequence is that of Translation initiation factor IF-2 from Xanthomonas oryzae pv. oryzae (strain MAFF 311018).